An 80-amino-acid chain; its full sequence is Saposin-B-Val (80 aa).

The Saposin B-type domain occupies 1-80 (GDVCQDCIQM…CGLVGFCEEV (80 aa)). Cystine bridges form between C4–C77, C7–C71, and C36–C47. An N-linked (GlcNAc...) (complex) asparagine glycan is attached at N21.

In terms of assembly, saposin-B is a homodimer. Interacts with GRN; facilitates lysosomal delivery of progranulin from the extracellular space and the biosynthetic pathway. The one residue extended Saposin-B-Val is only found in a minority of the chains.

Saposin-B stimulates the hydrolysis of galacto-cerebroside sulfate by arylsulfatase A (EC 3.1.6.8), GM1 gangliosides by beta-galactosidase (EC 3.2.1.23) and globotriaosylceramide by alpha-galactosidase A (EC 3.2.1.22). Saposin-B forms a solubilizing complex with the substrates of the sphingolipid hydrolases. This Sus scrofa (Pig) protein is Saposin-B-Val (PSAP).